The chain runs to 622 residues: Lamin Dm0 (622 aa).

The segment at 1 to 50 (MSSKSRRAGTATPQPGNTSTPRPPSAGPQPPPPSTHSQTASSPLSPTRHS) is disordered. Ser2 bears the N-acetylserine mark. The tract at residues 2 to 56 (SSKSRRAGTATPQPGNTSTPRPPSAGPQPPPPSTHSQTASSPLSPTRHSRVAEKV) is head. Thr10, Thr12, and Thr20 each carry phosphothreonine. Positions 21-34 (PRPPSAGPQPPPPS) are enriched in pro residues. 2 positions are modified to phosphoserine: Ser25 and Ser34. Phosphothreonine is present on Thr39. A phosphoserine mark is found at Ser41, Ser42, and Ser45. Phosphothreonine is present on Thr47. One can recognise an IF rod domain in the interval 54–410 (EKVELQNLND…KLLVGEEARL (357 aa)). The segment at 55–91 (KVELQNLNDRLATYIDRVRNLETENSRLTIEVQTTRD) is coil 1A. The segment at 92-103 (TVTRETTNIKNI) is linker 1. Positions 104-241 (FEAELLETRR…QIHSQEINES (138 aa)) are coil 1B. Ser235 is subject to Phosphoserine. The linker 2 stretch occupies residues 242–265 (RRIKQTEYSEIDGRLSSEYDAKLK). Tyr249 bears the Phosphotyrosine mark. Ser250 and Ser311 each carry phosphoserine. The interval 266-408 (QSLQELRAQY…YDKLLVGEEA (143 aa)) is coil 2. Residues 409–619 (RLNITPATNT…GDPQQSNEKC (211 aa)) are tail. Phosphothreonine occurs at positions 413 and 435. The span at 429-440 (RNSTRATPSRRT) shows a compositional bias: polar residues. The disordered stretch occupies residues 429–448 (RNSTRATPSRRTPSAAVKRK). Ser442 is modified (phosphoserine). Residues 446 to 451 (KRKRAV) carry the Nuclear localization signal motif. Residues Ser455 and Ser459 each carry the phosphoserine modification. An LTD domain is found at 461–588 (ADYYVSASAK…RIVSQHTSSS (128 aa)). Ser595 carries the phosphoserine modification. The residue at position 597 (Thr597) is a Phosphothreonine. The tract at residues 603–622 (EQLYHQQGDPQQSNEKCAIM) is disordered. Residues 605-622 (LYHQQGDPQQSNEKCAIM) show a composition bias toward polar residues. At Ser615 the chain carries Phosphoserine. Cys619 carries the post-translational modification Cysteine methyl ester. The S-farnesyl cysteine moiety is linked to residue Cys619. Residues 620 to 622 (AIM) constitute a propeptide, removed in mature form.

It belongs to the intermediate filament family. In terms of assembly, interacts directly with LBR. Interacts with MAN1. Interacts with Ote. In terms of processing, three forms of lamin have been identified in D.melanogaster, lamin Dm0 is rapidly processed to lamin Dm1 in the cytoplasm, Dm1 is then assembled in the nuclear envelope and is then phosphorylated, forming lamin Dm2. Constitutively expressed in all tissues (at protein level). Expressed in spermatocytes (at protein level).

It localises to the nucleus. The protein resides in the nucleus inner membrane. Its subcellular location is the nucleus envelope. It is found in the nucleus lamina. The protein localises to the cytoplasm. It localises to the cytoskeleton. The protein resides in the spindle pole. Functionally, lamins are components of the nuclear lamina, a fibrous layer on the nucleoplasmic side of the inner nuclear membrane, which is thought to provide a framework for the nuclear envelope and may also interact with chromatin. May have a role in the localization of the LEM domain proteins Ote, bocks and MAN1 to the nuclear membrane. In spermatocytes, plays a role in maintaining type-A lamin LamC nuclear localization; regulates meiotic cytokinesis by maintaining the structure of the spindle envelope, and by contributing to the formation of the contractile ring and central spindle. Required for nuclear migration and to link the microtubule organizing center (MTOC) to the nucleus. In addition, is required for nuclear envelope localization of klar. This is Lamin Dm0 from Drosophila melanogaster (Fruit fly).